Consider the following 213-residue polypeptide: Imidazole glycerol phosphate synthase subunit HisH (213 aa).

In terms of domain architecture, Glutamine amidotransferase type-1 spans 8–213; sequence TVALIDYGAG…FLSRFLDWNP (206 aa). The Nucleophile role is filled by Cys91. Catalysis depends on residues His193 and Glu195.

As to quaternary structure, heterodimer of HisH and HisF.

It is found in the cytoplasm. The catalysed reaction is 5-[(5-phospho-1-deoxy-D-ribulos-1-ylimino)methylamino]-1-(5-phospho-beta-D-ribosyl)imidazole-4-carboxamide + L-glutamine = D-erythro-1-(imidazol-4-yl)glycerol 3-phosphate + 5-amino-1-(5-phospho-beta-D-ribosyl)imidazole-4-carboxamide + L-glutamate + H(+). It catalyses the reaction L-glutamine + H2O = L-glutamate + NH4(+). It participates in amino-acid biosynthesis; L-histidine biosynthesis; L-histidine from 5-phospho-alpha-D-ribose 1-diphosphate: step 5/9. IGPS catalyzes the conversion of PRFAR and glutamine to IGP, AICAR and glutamate. The HisH subunit catalyzes the hydrolysis of glutamine to glutamate and ammonia as part of the synthesis of IGP and AICAR. The resulting ammonia molecule is channeled to the active site of HisF. The chain is Imidazole glycerol phosphate synthase subunit HisH from Zymomonas mobilis subsp. mobilis (strain ATCC 31821 / ZM4 / CP4).